Consider the following 623-residue polypeptide: UvrABC system protein C (623 aa).

In terms of domain architecture, GIY-YIG spans Pro12–Ile91. The UVR domain maps to Thr201–Thr236. Residues Arg603–Lys623 form a disordered region.

The protein belongs to the UvrC family. As to quaternary structure, interacts with UvrB in an incision complex.

The protein resides in the cytoplasm. In terms of biological role, the UvrABC repair system catalyzes the recognition and processing of DNA lesions. UvrC both incises the 5' and 3' sides of the lesion. The N-terminal half is responsible for the 3' incision and the C-terminal half is responsible for the 5' incision. The chain is UvrABC system protein C from Citrifermentans bemidjiense (strain ATCC BAA-1014 / DSM 16622 / JCM 12645 / Bem) (Geobacter bemidjiensis).